The following is a 102-amino-acid chain: Flagellar hook-basal body complex protein FliE 1 (102 aa).

This sequence belongs to the FliE family.

Its subcellular location is the bacterial flagellum basal body. This Bradyrhizobium diazoefficiens (strain JCM 10833 / BCRC 13528 / IAM 13628 / NBRC 14792 / USDA 110) protein is Flagellar hook-basal body complex protein FliE 1 (fliE1).